The following is a 263-amino-acid chain: Flagellar L-ring protein (263 aa).

Residues 1–15 form the signal peptide; the sequence is MKRLLCLLLLTTLTG. C16 is lipidated: N-palmitoyl cysteine. Residue C16 is the site of S-diacylglycerol cysteine attachment. The tract at residues 123–143 is disordered; that stretch reads KSADAELSKSNDSSMDPLQVG.

It belongs to the FlgH family. As to quaternary structure, the basal body constitutes a major portion of the flagellar organelle and consists of four rings (L,P,S, and M) mounted on a central rod.

It is found in the cell outer membrane. The protein resides in the bacterial flagellum basal body. Assembles around the rod to form the L-ring and probably protects the motor/basal body from shearing forces during rotation. The chain is Flagellar L-ring protein from Aliivibrio fischeri (strain ATCC 700601 / ES114) (Vibrio fischeri).